The primary structure comprises 523 residues: Protein NAM8 (523 aa).

The interval 1-35 (MSYKQTTYYPSRGNLVRNDSSPYTNTISSETNNSS) is disordered. Residues 24-35 (TNTISSETNNSS) are compositionally biased toward low complexity. RRM domains follow at residues 54-145 (NQLY…WATS), 163-242 (CSIF…PTSG), and 313-385 (TTVF…WGRS). The tract at residues 239 to 260 (PTSGQQQHVSGNNDYNRSSSSL) is disordered. Over residues 240–260 (TSGQQQHVSGNNDYNRSSSSL) the composition is skewed to polar residues.

As to quaternary structure, component of the U1 small nuclear ribonucleoprotein complex (U1 snRNP).

Functionally, component of the U1 small nuclear ribonucleoprotein complex (U1 snRNP) involved in the initiation of meiotic recombination. Involved in the formation of DSBs at recombination hot-spots through meiosis-specific splicing of REC107 pre-mRNA. Collaborates with MER1 to promote splicing of essential meiotic mRNAs REC10, AMA1, MER3, HFM1, SPO22 and PCH2. NAM8 interacts with the pre-mRNA downstream of the 5' splice site, in a region of non-conserved sequence and is required for efficient splicing of uncapped RNA precursor. The polypeptide is Protein NAM8 (Saccharomyces cerevisiae (strain ATCC 204508 / S288c) (Baker's yeast)).